The chain runs to 344 residues: MKDVTIIGGGPSGLYASFYAGLRDMSVRLIDVQSELGGKMRIYPEKIIWDIGGIAPKPCHEILKDTIKQGLYFKPEVHLNERVVDIRKKAERHFEVETEAGEIYTSKAVIIAIGAGIINPKQLDVKGVERYQLTNLHYVVQSYRRFKDKDVLISGGGNTALDWAHDIAKIAKSVTVVYRKEDVSGHEAMKTLVTDLNVKLCPKTRIKYLVGNDDETHISEVVLEHVESGDRHTVKFDDVIISHGFDRCNTLLSETSSKLDMHDDCRVKGFGNTTTSIPGIYACGDIVYHDAKSHLIASAFSDGANAANLAKTYIQPDANAEGYVSSHHEVFKEANKTIVNKHLY.

Positions 12, 31, 39, 43, 83, 118, 285, and 326 each coordinate FAD.

The protein belongs to the ferredoxin--NADP reductase type 2 family. As to quaternary structure, homodimer. It depends on FAD as a cofactor.

It carries out the reaction 2 reduced [2Fe-2S]-[ferredoxin] + NADP(+) + H(+) = 2 oxidized [2Fe-2S]-[ferredoxin] + NADPH. The chain is Ferredoxin--NADP reductase from Staphylococcus aureus (strain JH1).